The sequence spans 349 residues: Ribosomal RNA large subunit methyltransferase M (349 aa).

S-adenosyl-L-methionine contacts are provided by residues A216–G219, D235, D255, and D271. K300 acts as the Proton acceptor in catalysis.

Belongs to the class I-like SAM-binding methyltransferase superfamily. RNA methyltransferase RlmE family. RlmM subfamily. As to quaternary structure, monomer.

Its subcellular location is the cytoplasm. The catalysed reaction is cytidine(2498) in 23S rRNA + S-adenosyl-L-methionine = 2'-O-methylcytidine(2498) in 23S rRNA + S-adenosyl-L-homocysteine + H(+). In terms of biological role, catalyzes the 2'-O-methylation at nucleotide C2498 in 23S rRNA. This chain is Ribosomal RNA large subunit methyltransferase M, found in Saccharophagus degradans (strain 2-40 / ATCC 43961 / DSM 17024).